Consider the following 533-residue polypeptide: MSLVKKFITVGGATLGSRIFGFARETLMAAALGTGPMADVFYAAFRFPNLFRRLFAEGAFNAAFVPLFAKEIEANGIDGAKRFSEEVFGVLFSVLLLITIVMELAMPLLVRWVIAPGFADDAEKFDLTVRLAAVMFPYLMSMSLTAMMSGMLNSLHHFFAAAVAPIFLNLVMISALFYAIYFGADPLTTAWYLSWSVLVAGVLQLAVVYIGVRHAGISIGLRFPRFTPNVKRLLLLAIPAAITGGVTQINLVIGQAIASGKEGAIAALQYADRIYQLPLGVVGVAVGIVLLPELARSLKSGHIKEAANIQNRSIEFVLFLTLPAAVALWLLSDDIIRVLYERGAFNANNTTLVGSILAIFGLGLPAFVLIKALQPGFYAREDTKSPMRYTAIAVAVNSALSILLFPVLAERGIALAEAVAGWLNAVQLFVTLYRRGHLVWEWSLARRTAMLLVSSAVMGGVIVYLSHRWEPLLGSGSTLLTKTGVLGLLILIAMAVYFIVAFLIGGVDVGMIRRNLKRKRPAPASDAKAVNGE.

A run of 13 helical transmembrane segments spans residues 25 to 45 (ETLM…YAAF), 90 to 110 (VLFS…PLLV), 131 to 151 (LAAV…MSGM), 158 to 178 (FFAA…ALFY), 192 to 212 (YLSW…YIGV), 233 to 253 (LLLL…NLVI), 274 to 294 (IYQL…LPEL), 316 to 336 (FVLF…DDII), 350 to 370 (TTLV…FVLI), 389 to 409 (YTAI…PVLA), 412 to 432 (GIAL…FVTL), 449 to 469 (AMLL…SHRW), and 484 to 504 (GVLG…AFLI).

Belongs to the MurJ/MviN family.

The protein localises to the cell inner membrane. The protein operates within cell wall biogenesis; peptidoglycan biosynthesis. In terms of biological role, involved in peptidoglycan biosynthesis. Transports lipid-linked peptidoglycan precursors from the inner to the outer leaflet of the cytoplasmic membrane. The protein is Probable lipid II flippase MurJ of Rhizobium tropici.